The sequence spans 374 residues: Peptide chain release factor 2 (374 aa).

The residue at position 250 (Q250) is an N5-methylglutamine.

It belongs to the prokaryotic/mitochondrial release factor family. Methylated by PrmC. Methylation increases the termination efficiency of RF2.

Its subcellular location is the cytoplasm. Functionally, peptide chain release factor 2 directs the termination of translation in response to the peptide chain termination codons UGA and UAA. This Roseobacter denitrificans (strain ATCC 33942 / OCh 114) (Erythrobacter sp. (strain OCh 114)) protein is Peptide chain release factor 2.